A 204-amino-acid chain; its full sequence is Small ribosomal subunit protein uS4 (204 aa).

The S4 RNA-binding domain maps to 92-157 (RRLDALVLRS…KPLFEVAREG (66 aa)).

The protein belongs to the universal ribosomal protein uS4 family. Part of the 30S ribosomal subunit. Contacts protein S5. The interaction surface between S4 and S5 is involved in control of translational fidelity.

Functionally, one of the primary rRNA binding proteins, it binds directly to 16S rRNA where it nucleates assembly of the body of the 30S subunit. Its function is as follows. With S5 and S12 plays an important role in translational accuracy. This Streptomyces avermitilis (strain ATCC 31267 / DSM 46492 / JCM 5070 / NBRC 14893 / NCIMB 12804 / NRRL 8165 / MA-4680) protein is Small ribosomal subunit protein uS4.